We begin with the raw amino-acid sequence, 517 residues long: Glutamate--cysteine ligase (517 aa).

This sequence belongs to the glutamate--cysteine ligase type 1 family. Type 1 subfamily.

It carries out the reaction L-cysteine + L-glutamate + ATP = gamma-L-glutamyl-L-cysteine + ADP + phosphate + H(+). It participates in sulfur metabolism; glutathione biosynthesis; glutathione from L-cysteine and L-glutamate: step 1/2. The sequence is that of Glutamate--cysteine ligase from Pectobacterium atrosepticum (strain SCRI 1043 / ATCC BAA-672) (Erwinia carotovora subsp. atroseptica).